The sequence spans 91 residues: Large ribosomal subunit protein eL43 (91 aa).

A C4-type zinc finger spans residues 38 to 59; that stretch reads CNFCGKDSLKRKAAGIWECKAC.

Belongs to the eukaryotic ribosomal protein eL43 family.

The sequence is that of Large ribosomal subunit protein eL43 from Schistosoma mansoni (Blood fluke).